The sequence spans 542 residues: Putative inactive cadmium/zinc-transporting ATPase HMA3 (542 aa).

The Cytoplasmic portion of the chain corresponds to 1-89; sequence MAEGEESKKM…VRPYGETSLK (89 aa). The 67-residue stretch at 13–79 folds into the HMA domain; it reads QTSYFDVVGI…ALNQARLEAS (67 aa). The chain crosses the membrane as a helical span at residues 90–111; that stretch reads SQWPSPFAIVSGVLLVLSFFKY. The Extracellular portion of the chain corresponds to 112–114; sequence FYS. The helical transmembrane segment at 115-134 threads the bilayer; that stretch reads PLEWLAIVAVVAGVFPILAK. Residues 135–141 are Cytoplasmic-facing; that stretch reads AVASVTR. Residues 142-162 form a helical membrane-spanning segment; it reads FRLDINALTLIAVIATLCMQD. Position 163 (Phe-163) is a topological domain, extracellular. A helical transmembrane segment spans residues 164–184; sequence TEAATIVFLFSVADWLESSAA. At 185-310 the chain is on the cytoplasmic side; the sequence is HKASIVMSSL…QTKTQRFIDK (126 aa). Residues 311 to 333 form a helical membrane-spanning segment; sequence CSRYYTPAVVVSAACFAVIPVLL. Over 334-341 the chain is Extracellular; it reads KVQDLSHW. The helical transmembrane segment at 342 to 359 threads the bilayer; the sequence is FHLALVVLVSGCPCGLIL. The Cytoplasmic segment spans residues 360–542; sequence STPVATFCAL…VAQALKELKS (183 aa).

Belongs to the cation transport ATPase (P-type) (TC 3.A.3) family. Type IB subfamily.

The protein resides in the membrane. The chain is Putative inactive cadmium/zinc-transporting ATPase HMA3 (HMA3) from Arabidopsis thaliana (Mouse-ear cress).